A 231-amino-acid polypeptide reads, in one-letter code: Ribonuclease 3 (231 aa).

An RNase III domain is found at 7–135; sequence IQAIESKLNF…ILGAVYLDGG (129 aa). Residue Glu48 coordinates Mg(2+). The active site involves Asp52. Residues Asn121 and Glu124 each contribute to the Mg(2+) site. Glu124 is a catalytic residue. The region spanning 160-229 is the DRBM domain; the sequence is NPKNRLQQFT…AKQALSTHDN (70 aa).

It belongs to the ribonuclease III family. As to quaternary structure, homodimer. Requires Mg(2+) as cofactor.

It is found in the cytoplasm. It catalyses the reaction Endonucleolytic cleavage to 5'-phosphomonoester.. Functionally, digests double-stranded RNA. Involved in the processing of primary rRNA transcript to yield the immediate precursors to the large and small rRNAs (23S and 16S). Processes some mRNAs, and tRNAs when they are encoded in the rRNA operon. Processes pre-crRNA and tracrRNA of type II CRISPR loci if present in the organism. The polypeptide is Ribonuclease 3 (Chlamydia trachomatis serovar L2 (strain ATCC VR-902B / DSM 19102 / 434/Bu)).